Here is a 250-residue protein sequence, read N- to C-terminus: Bis(5'-nucleosyl)-tetraphosphatase PrpE [asymmetrical] (250 aa).

Belongs to the PrpE family. The cofactor is Ni(2+).

It catalyses the reaction P(1),P(4)-bis(5'-guanosyl) tetraphosphate + H2O = GMP + GTP + 2 H(+). Functionally, asymmetrically hydrolyzes Ap4p to yield AMP and ATP. In Oceanobacillus iheyensis (strain DSM 14371 / CIP 107618 / JCM 11309 / KCTC 3954 / HTE831), this protein is Bis(5'-nucleosyl)-tetraphosphatase PrpE [asymmetrical].